Reading from the N-terminus, the 188-residue chain is Pyridoxal 5'-phosphate synthase subunit PdxT (188 aa).

Position 46–48 (46–48) interacts with L-glutamine; sequence GES. The active-site Nucleophile is the C78. L-glutamine contacts are provided by residues R105 and 133–134; that span reads IR. Residues H169 and E171 each act as charge relay system in the active site.

This sequence belongs to the glutaminase PdxT/SNO family. In the presence of PdxS, forms a dodecamer of heterodimers. Only shows activity in the heterodimer.

The enzyme catalyses aldehydo-D-ribose 5-phosphate + D-glyceraldehyde 3-phosphate + L-glutamine = pyridoxal 5'-phosphate + L-glutamate + phosphate + 3 H2O + H(+). It carries out the reaction L-glutamine + H2O = L-glutamate + NH4(+). It functions in the pathway cofactor biosynthesis; pyridoxal 5'-phosphate biosynthesis. Catalyzes the hydrolysis of glutamine to glutamate and ammonia as part of the biosynthesis of pyridoxal 5'-phosphate. The resulting ammonia molecule is channeled to the active site of PdxS. The sequence is that of Pyridoxal 5'-phosphate synthase subunit PdxT from Thermosipho africanus (strain TCF52B).